The following is a 354-amino-acid chain: Inactive ADP-ribosyltransferase ARH2 (354 aa).

Residue S27 is modified to Phosphoserine.

The protein belongs to the ADP-ribosylglycohydrolase family.

It is found in the cytoplasm. The protein resides in the myofibril. Its subcellular location is the sarcomere. In terms of biological role, required for myofibril assembly and outgrowth of the cardiac chambers in the developing heart. Appears to be catalytically inactive, showing no activity against O-acetyl-ADP-ribose. The protein is Inactive ADP-ribosyltransferase ARH2 (ADPRHL1) of Bos taurus (Bovine).